The following is a 426-amino-acid chain: Glutamyl-tRNA reductase (426 aa).

Residues 49–52 (TCNR), S107, 112–114 (EPQ), and Q118 contribute to the substrate site. The Nucleophile role is filled by C50. Residue 187–192 (GAGETI) coordinates NADP(+).

The protein belongs to the glutamyl-tRNA reductase family. As to quaternary structure, homodimer.

The enzyme catalyses (S)-4-amino-5-oxopentanoate + tRNA(Glu) + NADP(+) = L-glutamyl-tRNA(Glu) + NADPH + H(+). It participates in porphyrin-containing compound metabolism; protoporphyrin-IX biosynthesis; 5-aminolevulinate from L-glutamyl-tRNA(Glu): step 1/2. Its function is as follows. Catalyzes the NADPH-dependent reduction of glutamyl-tRNA(Glu) to glutamate 1-semialdehyde (GSA). The sequence is that of Glutamyl-tRNA reductase from Ectopseudomonas mendocina (strain ymp) (Pseudomonas mendocina).